The chain runs to 274 residues: Large ribosomal subunit protein uL2 (274 aa).

The segment at 223 to 256 is disordered; sequence VVMNPVDHPHGGGEGKTGEGRHPVDPWGNLTKGY. A compositionally biased stretch (basic and acidic residues) spans 229–246; it reads DHPHGGGEGKTGEGRHPV.

It belongs to the universal ribosomal protein uL2 family. Part of the 50S ribosomal subunit. Forms a bridge to the 30S subunit in the 70S ribosome.

Its function is as follows. One of the primary rRNA binding proteins. Required for association of the 30S and 50S subunits to form the 70S ribosome, for tRNA binding and peptide bond formation. It has been suggested to have peptidyltransferase activity; this is somewhat controversial. Makes several contacts with the 16S rRNA in the 70S ribosome. In Variovorax paradoxus (strain S110), this protein is Large ribosomal subunit protein uL2.